The sequence spans 157 residues: Small ribosomal subunit protein uS7 (157 aa).

It belongs to the universal ribosomal protein uS7 family. In terms of assembly, part of the 30S ribosomal subunit. Contacts proteins S9 and S11.

One of the primary rRNA binding proteins, it binds directly to 16S rRNA where it nucleates assembly of the head domain of the 30S subunit. Is located at the subunit interface close to the decoding center, probably blocks exit of the E-site tRNA. This Phenylobacterium zucineum (strain HLK1) protein is Small ribosomal subunit protein uS7.